Reading from the N-terminus, the 286-residue chain is MTALLIDGNALSKTLRAQAAERAAALTARGHQPGLAVILVGANPASEVYVRNKIKACEDNGFFSLKDAYPDTLSEADLLARIDELNRDPKIHGILVQLPLPKHIDSHKVIEAIAPEKDVDGFHIANAGALMTGKPLFRPCTPYGVMKMFEAHDIPLQGANAVVIGRSNIVGKPMAMMLLDAGATVTICHSKTRDLAAHTRQADIVVAAVGKRNILTADMVKPGATVIDVGMNRDDAGKLCGDVDFAGVKEVASHITPVPGGVGPMTITMLLINTIEAAERAADAAA.

NADP(+)-binding positions include 165 to 167 and serine 190; that span reads GRS.

Belongs to the tetrahydrofolate dehydrogenase/cyclohydrolase family. Homodimer.

The enzyme catalyses (6R)-5,10-methylene-5,6,7,8-tetrahydrofolate + NADP(+) = (6R)-5,10-methenyltetrahydrofolate + NADPH. It carries out the reaction (6R)-5,10-methenyltetrahydrofolate + H2O = (6R)-10-formyltetrahydrofolate + H(+). It participates in one-carbon metabolism; tetrahydrofolate interconversion. In terms of biological role, catalyzes the oxidation of 5,10-methylenetetrahydrofolate to 5,10-methenyltetrahydrofolate and then the hydrolysis of 5,10-methenyltetrahydrofolate to 10-formyltetrahydrofolate. This is Bifunctional protein FolD from Burkholderia lata (strain ATCC 17760 / DSM 23089 / LMG 22485 / NCIMB 9086 / R18194 / 383).